The primary structure comprises 491 residues: Fibrinogen beta chain (491 aa).

The N-terminal stretch at 1–30 (MKRMVSWSFHKLKTMKHLLLLLLCVFLVKS) is a signal peptide. Q31 is subject to Pyrrolidone carboxylic acid. The segment at 44–75 (RGHRPLDKKREEAPSLRPAPPPISGGGYRARP) is disordered. Residues 45–47 (GHR) are beta-chain polymerization, binding distal domain of another fibrin. Residues 47-57 (RPLDKKREEAP) show a composition bias toward basic and acidic residues. Residues 157 to 222 (KRQKQVKDNE…ESDVSAQMEY (66 aa)) adopt a coiled-coil conformation. Cystine bridges form between C231–C316 and C241–C270. The Fibrinogen C-terminal domain occupies 232–488 (NIPVVSGKEC…KMSMKIRPFF (257 aa)). N-linked (GlcNAc...) asparagine glycosylation occurs at N394. The cysteines at positions 424 and 437 are disulfide-linked.

Heterohexamer; disulfide linked. Contains 2 sets of 3 non-identical chains (alpha, beta and gamma). The 2 heterotrimers are in head to head conformation with the N-termini in a small central domain. In terms of processing, conversion of fibrinogen to fibrin is triggered by thrombin, which cleaves fibrinopeptides A and B from alpha and beta chains, and thus exposes the N-terminal polymerization sites responsible for the formation of the soft clot. The soft clot is converted into the hard clot by factor XIIIA which catalyzes the epsilon-(gamma-glutamyl)lysine cross-linking between gamma chains (stronger) and between alpha chains (weaker) of different monomers. As to expression, detected in blood plasma (at protein level).

Its subcellular location is the secreted. Cleaved by the protease thrombin to yield monomers which, together with fibrinogen alpha (FGA) and fibrinogen gamma (FGG), polymerize to form an insoluble fibrin matrix. Fibrin has a major function in hemostasis as one of the primary components of blood clots. In addition, functions during the early stages of wound repair to stabilize the lesion and guide cell migration during re-epithelialization. Was originally thought to be essential for platelet aggregation, based on in vitro studies using anticoagulated blood. However subsequent studies have shown that it is not absolutely required for thrombus formation in vivo. Enhances expression of SELP in activated platelets. Maternal fibrinogen is essential for successful pregnancy. Fibrin deposition is also associated with infection, where it protects against IFNG-mediated hemorrhage. May also facilitate the antibacterial immune response via both innate and T-cell mediated pathways. The polypeptide is Fibrinogen beta chain (FGB) (Homo sapiens (Human)).